The following is a 462-amino-acid chain: dTDP-4-dehydro-2,6-dideoxy-D-glucose 3-dehydratase (462 aa).

Pyridoxal 5'-phosphate is bound by residues 112 to 113 (GS), Asp220, and Ser241. His246 functions as the Proton donor/acceptor in the catalytic mechanism. Position 314 (Asn314) interacts with pyridoxal 5'-phosphate.

Belongs to the DegT/DnrJ/EryC1 family. As to quaternary structure, homodimer. Pyridoxal 5'-phosphate is required as a cofactor.

The catalysed reaction is dTDP-4-dehydro-2,6-dideoxy-alpha-D-glucose + 2 reduced [2Fe-2S]-[ferredoxin] + 2 H(+) = dTDP-4-dehydro-2,3,6-trideoxy-alpha-D-hexopyranose + 2 oxidized [2Fe-2S]-[ferredoxin] + H2O. In terms of biological role, involved in the biosynthesis of forosamine ((4-dimethylamino)-2,3,4,6-tetradeoxy-alpha-D-threo-hexopyranose), a highly deoxygenated sugar component of several bioactive natural products such as the insecticidal spinosyns A and D. Catalyzes C-3 deoxygenation of dTDP-4-keto-2,6-dideoxy-alpha-D-glucose to yield dTDP-4-keto-2,3,6-trideoxy-D-glucose via a combined transamination-deoxygenation reaction. The catalysis is initiated by a transamination step in which pyridoxal 5'-phosphate (PLP) is converted to pyridoxamine 5'-phosphate (PMP) in the presence of L-glutamate. This coenzyme then forms a Schiff base with dTDP-4-keto-2,6-dideoxy-alpha-D-glucose and the resulting adduct undergoes a PMP-mediated beta-dehydration reaction to give a sugar enamine intermediate, which after a 2 electrons reduction and hydrolysis yields dTDP-4-keto-2,3,6-trideoxy-D-glucose as a product. Requires cellular reductase (ferredoxin or flavodoxin reductase) rather than a specific partner reductase. L-glutamate is 20-fold more efficient than L-aspartate as an amino donor. In the absence of an electron source and in the presence of L-glutamate, catalyzes a transamination reaction, converting dTDP-4-keto-2,6-dideoxy-alpha-D-glucose to dTDP-4-amino-2,4,6-trideoxy-D-glucose. The sequence is that of dTDP-4-dehydro-2,6-dideoxy-D-glucose 3-dehydratase from Saccharopolyspora spinosa.